We begin with the raw amino-acid sequence, 243 residues long: Uridylate kinase (243 aa).

12 to 15 (KLSG) contributes to the ATP binding site. Residues 20 to 25 (GAKGFG) are involved in allosteric activation by GTP. The ATP site is built by G55 and R59. UMP-binding positions include D74 and 135 to 142 (TGNPYFTT). Residues Q163, Y169, and D172 each coordinate ATP.

Belongs to the UMP kinase family. In terms of assembly, homohexamer.

The protein resides in the cytoplasm. The enzyme catalyses UMP + ATP = UDP + ADP. It participates in pyrimidine metabolism; CTP biosynthesis via de novo pathway; UDP from UMP (UMPK route): step 1/1. Allosterically activated by GTP. Inhibited by UTP. Catalyzes the reversible phosphorylation of UMP to UDP. The sequence is that of Uridylate kinase from Symbiobacterium thermophilum (strain DSM 24528 / JCM 14929 / IAM 14863 / T).